The following is a 71-amino-acid chain: NAD(P)H-quinone oxidoreductase subunit O (71 aa).

The protein belongs to the complex I NdhO subunit family. As to quaternary structure, NDH-1 can be composed of about 15 different subunits; different subcomplexes with different compositions have been identified which probably have different functions.

Its subcellular location is the cellular thylakoid membrane. It carries out the reaction a plastoquinone + NADH + (n+1) H(+)(in) = a plastoquinol + NAD(+) + n H(+)(out). The catalysed reaction is a plastoquinone + NADPH + (n+1) H(+)(in) = a plastoquinol + NADP(+) + n H(+)(out). NDH-1 shuttles electrons from an unknown electron donor, via FMN and iron-sulfur (Fe-S) centers, to quinones in the respiratory and/or the photosynthetic chain. The immediate electron acceptor for the enzyme in this species is believed to be plastoquinone. Couples the redox reaction to proton translocation, and thus conserves the redox energy in a proton gradient. Cyanobacterial NDH-1 also plays a role in inorganic carbon-concentration. This Microcystis aeruginosa (strain NIES-843 / IAM M-2473) protein is NAD(P)H-quinone oxidoreductase subunit O.